The chain runs to 229 residues: Heptaprenylglyceryl phosphate synthase (229 aa).

Lysine 12 lines the sn-glycerol 1-phosphate pocket. Mg(2+)-binding residues include aspartate 14 and serine 40. Residues 159-164, glycine 189, and 209-210 each bind sn-glycerol 1-phosphate; these read YLEYSG and GN.

The protein belongs to the GGGP/HepGP synthase family. Group I subfamily. In terms of assembly, homodimer. The cofactor is Mg(2+).

The catalysed reaction is sn-glycerol 1-phosphate + all-trans-heptaprenyl diphosphate = 3-heptaprenyl-sn-glycero-1-phosphate + diphosphate. The protein operates within membrane lipid metabolism; glycerophospholipid metabolism. Prenyltransferase that catalyzes in vivo the transfer of the heptaprenyl moiety of heptaprenyl pyrophosphate (HepPP; 35 carbon atoms) to the C3 hydroxyl of sn-glycerol-1-phosphate (G1P), producing heptaprenylglyceryl phosphate (HepGP). This reaction is an ether-bond-formation step in the biosynthesis of archaea-type G1P-based membrane lipids found in Bacillales. This chain is Heptaprenylglyceryl phosphate synthase, found in Bacillus anthracis (strain A0248).